Here is a 236-residue protein sequence, read N- to C-terminus: uncharacterized protein (236 aa).

7 helical membrane passes run 32-52 (MALA…VEPI), 61-81 (FGTI…MGFG), 90-110 (ILFW…ALIY), 115-135 (IART…YGYS), 144-164 (GSFF…NLFL), 167-187 (SSLS…LIAW), and 208-228 (LSIM…LYLM).

This sequence belongs to the BI1 family.

Its subcellular location is the cell membrane. This is an uncharacterized protein from Rickettsia prowazekii (strain Madrid E).